The primary structure comprises 397 residues: Elongation factor Tu (397 aa).

In terms of domain architecture, tr-type G spans 10-207 (KPHVNVGTIG…TLDAYIPEPE (198 aa)). The tract at residues 19-26 (GHVDHGKT) is G1. Position 19–26 (19–26 (GHVDHGKT)) interacts with GTP. Thr-26 lines the Mg(2+) pocket. The tract at residues 60–64 (GITIA) is G2. Residues 81 to 84 (DCPG) form a G3 region. GTP-binding positions include 81–85 (DCPGH) and 136–139 (NKAD). The segment at 136–139 (NKAD) is G4. Residues 174–176 (SAL) are G5.

It belongs to the TRAFAC class translation factor GTPase superfamily. Classic translation factor GTPase family. EF-Tu/EF-1A subfamily. Monomer.

Its subcellular location is the cytoplasm. It catalyses the reaction GTP + H2O = GDP + phosphate + H(+). In terms of biological role, GTP hydrolase that promotes the GTP-dependent binding of aminoacyl-tRNA to the A-site of ribosomes during protein biosynthesis. The protein is Elongation factor Tu of Hahella chejuensis (strain KCTC 2396).